The following is a 600-amino-acid chain: Transcription factor efl-3 (600 aa).

The segment at 35-65 is disordered; sequence LPEPRVNRTTDPDHENLLPSPVPRPSPAMSQ. Over residues 39 to 50 the composition is skewed to basic and acidic residues; it reads RVNRTTDPDHEN. DNA-binding regions lie at residues 95-164 and 253-343; these read RKEK…QWQG and RDRQ…VYCG.

The protein belongs to the E2F/DP family.

The protein localises to the nucleus. In terms of biological role, probable transcription factor which represses gene expression in a subset of ventral nerve cord neurons. Involved in regulating programmed cell death and determining cell fate during development, acting in a partially redundant manner with lin-39 to repress the BH3 domain-encoding gene egl-1 in the VA and VB motor neurons. This is Transcription factor efl-3 from Caenorhabditis elegans.